The sequence spans 161 residues: Peptidyl-prolyl cis-trans isomerase-like 3 (161 aa).

S2 carries the post-translational modification N-acetylserine. Residues 2–154 enclose the PPIase cyclophilin-type domain; sequence SVTLHTDVGD…NDVHIKDITI (153 aa). At R61 the chain carries Omega-N-methylarginine.

Belongs to the cyclophilin-type PPIase family. PPIL3 subfamily. In terms of assembly, identified in the spliceosome C complex.

It carries out the reaction [protein]-peptidylproline (omega=180) = [protein]-peptidylproline (omega=0). PPIases accelerate the folding of proteins. It catalyzes the cis-trans isomerization of proline imidic peptide bonds in oligopeptides. May be involved in pre-mRNA splicing. In Mus musculus (Mouse), this protein is Peptidyl-prolyl cis-trans isomerase-like 3 (Ppil3).